The sequence spans 148 residues: 3-hydroxyacyl-[acyl-carrier-protein] dehydratase FabZ (148 aa).

Residue His-48 is part of the active site.

This sequence belongs to the thioester dehydratase family. FabZ subfamily.

It localises to the cytoplasm. The catalysed reaction is a (3R)-hydroxyacyl-[ACP] = a (2E)-enoyl-[ACP] + H2O. In terms of biological role, involved in unsaturated fatty acids biosynthesis. Catalyzes the dehydration of short chain beta-hydroxyacyl-ACPs and long chain saturated and unsaturated beta-hydroxyacyl-ACPs. This is 3-hydroxyacyl-[acyl-carrier-protein] dehydratase FabZ from Nitratiruptor sp. (strain SB155-2).